Here is a 336-residue protein sequence, read N- to C-terminus: Myb family transcription factor PHL8 (336 aa).

The HTH myb-type domain occupies 31–91; that stretch reads TDAKPRLKWT…HLQKYRLGKS (61 aa). The segment at residues 62–87 is a DNA-binding region (H-T-H motif); it reads PKGLMKVMEIPGLTLYHLKSHLQKYR. Residues 100 to 134 are disordered; sequence EVSSASENQEVESKNDSRDLRGCSVTEENSNPAKE. Residues 110–120 show a composition bias toward basic and acidic residues; sequence VESKNDSRDLR. Residues 139–159 are a coiled coil; it reads TEALQMQMEVQKKLHEQIEVQ. The LHEQLE motif lies at 152-157; it reads LHEQIE.

Belongs to the MYB-CC family.

The protein localises to the nucleus. The polypeptide is Myb family transcription factor PHL8 (Arabidopsis thaliana (Mouse-ear cress)).